The following is a 232-amino-acid chain: Orotate phosphoribosyltransferase (232 aa).

5-phospho-alpha-D-ribose 1-diphosphate-binding positions include Arg-107, Lys-108, Lys-111, and 133–141 (EDLTTDGGS). Thr-137 serves as a coordination point for orotate.

It belongs to the purine/pyrimidine phosphoribosyltransferase family. PyrE subfamily. Homodimer. It depends on Mg(2+) as a cofactor.

It carries out the reaction orotidine 5'-phosphate + diphosphate = orotate + 5-phospho-alpha-D-ribose 1-diphosphate. Its pathway is pyrimidine metabolism; UMP biosynthesis via de novo pathway; UMP from orotate: step 1/2. In terms of biological role, catalyzes the transfer of a ribosyl phosphate group from 5-phosphoribose 1-diphosphate to orotate, leading to the formation of orotidine monophosphate (OMP). The protein is Orotate phosphoribosyltransferase of Cereibacter sphaeroides (strain KD131 / KCTC 12085) (Rhodobacter sphaeroides).